Consider the following 344-residue polypeptide: Anthranilate phosphoribosyltransferase (344 aa).

5-phospho-alpha-D-ribose 1-diphosphate is bound by residues G86, 89-90, T94, 96-99, 114-122, and S126; these read GD, NIST, and KHGNKSASG. G86 provides a ligand contact to anthranilate. A Mg(2+)-binding site is contributed by S98. Residue N117 participates in anthranilate binding. Residue R172 coordinates anthranilate. Mg(2+) is bound by residues D231 and E232.

This sequence belongs to the anthranilate phosphoribosyltransferase family. Homodimer. Requires Mg(2+) as cofactor.

It catalyses the reaction N-(5-phospho-beta-D-ribosyl)anthranilate + diphosphate = 5-phospho-alpha-D-ribose 1-diphosphate + anthranilate. It functions in the pathway amino-acid biosynthesis; L-tryptophan biosynthesis; L-tryptophan from chorismate: step 2/5. Functionally, catalyzes the transfer of the phosphoribosyl group of 5-phosphorylribose-1-pyrophosphate (PRPP) to anthranilate to yield N-(5'-phosphoribosyl)-anthranilate (PRA). This is Anthranilate phosphoribosyltransferase from Prochlorococcus marinus (strain AS9601).